The primary structure comprises 294 residues: Probable aspartoacylase (294 aa).

Residues His-14 and Glu-17 each contribute to the Zn(2+) site. Residues Arg-56 and 63-64 each bind substrate; that span reads NR. Zn(2+) is bound at residue His-106. Residues Glu-164 and Tyr-275 each contribute to the substrate site.

This sequence belongs to the AspA/AstE family. Aspartoacylase subfamily. It depends on Zn(2+) as a cofactor.

The enzyme catalyses an N-acyl-L-aspartate + H2O = a carboxylate + L-aspartate. The chain is Probable aspartoacylase from Nostoc sp. (strain PCC 7120 / SAG 25.82 / UTEX 2576).